The following is a 367-amino-acid chain: Glutamate 5-kinase (367 aa).

Lysine 9 contacts ATP. Substrate is bound by residues serine 49, aspartate 136, and asparagine 148. ATP contacts are provided by residues 168–169 (TD) and 210–216 (TGGMKSK). A PUA domain is found at 276–350 (SGQIEIDAGA…GMQSQQIQAR (75 aa)).

The protein belongs to the glutamate 5-kinase family.

Its subcellular location is the cytoplasm. It catalyses the reaction L-glutamate + ATP = L-glutamyl 5-phosphate + ADP. The protein operates within amino-acid biosynthesis; L-proline biosynthesis; L-glutamate 5-semialdehyde from L-glutamate: step 1/2. Functionally, catalyzes the transfer of a phosphate group to glutamate to form L-glutamate 5-phosphate. The protein is Glutamate 5-kinase of Bacillus anthracis.